The chain runs to 67 residues: DNA-directed RNA polymerase subunit omega (67 aa).

The protein belongs to the RNA polymerase subunit omega family. In terms of assembly, the RNAP catalytic core consists of 2 alpha, 1 beta, 1 beta' and 1 omega subunit. When a sigma factor is associated with the core the holoenzyme is formed, which can initiate transcription.

The enzyme catalyses RNA(n) + a ribonucleoside 5'-triphosphate = RNA(n+1) + diphosphate. Promotes RNA polymerase assembly. Latches the N- and C-terminal regions of the beta' subunit thereby facilitating its interaction with the beta and alpha subunits. This chain is DNA-directed RNA polymerase subunit omega, found in Bordetella avium (strain 197N).